Reading from the N-terminus, the 215-residue chain is Small ribosomal subunit protein bS6 (215 aa).

Disordered stretches follow at residues 121 to 153 and 187 to 215; these read RENN…QKPK and NQRQ…KDKQ. Over residues 144-153 the composition is skewed to basic and acidic residues; it reads SRTEKAQKPK. The segment covering 188-198 has biased composition (low complexity); the sequence is QRQNQQNNNNN. Over residues 199-215 the composition is skewed to basic and acidic residues; sequence RFDRNRNRQHNRFKDKQ.

Belongs to the bacterial ribosomal protein bS6 family.

Functionally, binds together with bS18 to 16S ribosomal RNA. The protein is Small ribosomal subunit protein bS6 (rpsF) of Mycoplasma pneumoniae (strain ATCC 29342 / M129 / Subtype 1) (Mycoplasmoides pneumoniae).